A 571-amino-acid chain; its full sequence is Isocitrate dehydrogenase kinase/phosphatase 2 (571 aa).

ATP-binding positions include A313–M319 and K334. D369 is an active-site residue.

Belongs to the AceK family.

The protein localises to the cytoplasm. The catalysed reaction is L-seryl-[isocitrate dehydrogenase] + ATP = O-phospho-L-seryl-[isocitrate dehydrogenase] + ADP + H(+). Bifunctional enzyme which can phosphorylate or dephosphorylate isocitrate dehydrogenase (IDH) on a specific serine residue. This is a regulatory mechanism which enables bacteria to bypass the Krebs cycle via the glyoxylate shunt in response to the source of carbon. When bacteria are grown on glucose, IDH is fully active and unphosphorylated, but when grown on acetate or ethanol, the activity of IDH declines drastically concomitant with its phosphorylation. The chain is Isocitrate dehydrogenase kinase/phosphatase 2 from Pseudoalteromonas translucida (strain TAC 125).